The chain runs to 665 residues: Translation factor guf1, mitochondrial (665 aa).

The transit peptide at 1–40 (MRGCLQLARWLSAAPTRPAASHWPGLCAAPRFFSHSAILR) directs the protein to the mitochondrion. The 181-residue stretch at 67 to 247 (ERYRNFCIVA…TVVDKIPAPI (181 aa)) folds into the tr-type G domain. Residues 76 to 83 (AHVDHGKS), 140 to 144 (DTPGH), and 194 to 197 (NKVD) contribute to the GTP site.

The protein belongs to the TRAFAC class translation factor GTPase superfamily. Classic translation factor GTPase family. LepA subfamily.

It is found in the mitochondrion inner membrane. The enzyme catalyses GTP + H2O = GDP + phosphate + H(+). Its function is as follows. Promotes mitochondrial protein synthesis. May act as a fidelity factor of the translation reaction, by catalyzing a one-codon backward translocation of tRNAs on improperly translocated ribosomes. Binds to mitochondrial ribosomes in a GTP-dependent manner. This chain is Translation factor guf1, mitochondrial (guf1), found in Aspergillus terreus (strain NIH 2624 / FGSC A1156).